Consider the following 885-residue polypeptide: DNA mismatch repair protein MutS (885 aa).

640–647 is an ATP binding site; that stretch reads GPNMGGKS.

It belongs to the DNA mismatch repair MutS family.

In terms of biological role, this protein is involved in the repair of mismatches in DNA. It is possible that it carries out the mismatch recognition step. This protein has a weak ATPase activity. This Variovorax paradoxus (strain S110) protein is DNA mismatch repair protein MutS.